The following is a 288-amino-acid chain: Acetylglutamate kinase (288 aa).

Residues 66–67, R88, and N182 contribute to the substrate site; that span reads GG.

This sequence belongs to the acetylglutamate kinase family. ArgB subfamily.

Its subcellular location is the cytoplasm. The catalysed reaction is N-acetyl-L-glutamate + ATP = N-acetyl-L-glutamyl 5-phosphate + ADP. It participates in amino-acid biosynthesis; L-arginine biosynthesis; N(2)-acetyl-L-ornithine from L-glutamate: step 2/4. Catalyzes the ATP-dependent phosphorylation of N-acetyl-L-glutamate. The chain is Acetylglutamate kinase from Brachyspira hyodysenteriae (strain ATCC 49526 / WA1).